Reading from the N-terminus, the 908-residue chain is E3 ubiquitin-protein ligase ZNF598 (908 aa).

The RING-type zinc-finger motif lies at 27–67; the sequence is CVLCCGDLEATALGRCDHPVCYRCSTKMRVLCEQRYCAVCR. The segment at 185–208 adopts a C2H2-type zinc-finger fold; it reads PLCKFCDERYLDNDELLKHLRRDH. Disordered regions lie at residues 292–338, 350–441, 467–557, 569–619, and 719–744; these read SRRS…KREE, SVAA…EEDF, PGPP…TVQG, SLLA…LEAP, and PSSH…TPGL. Residue serine 295 is modified to Phosphoserine. Tyrosine 304 is modified (phosphotyrosine). A compositionally biased stretch (low complexity) spans 313 to 329; the sequence is QGRAGRASGRGAQQNRR. A compositionally biased stretch (basic and acidic residues) spans 358 to 385; the sequence is ETQRVEDREEGSRPKKEEAAARVPEEPR. The residue at position 433 (serine 433) is a Phosphoserine. Residues 482–501 are compositionally biased toward low complexity; the sequence is PALVSSAPKPSSAPSSLISA. The span at 529-538 shows a compositional bias: basic residues; the sequence is KAGKGSRGGR.

This sequence belongs to the ZNF598/HEL2 family. In terms of assembly, interacts with the E2 ubiquitin-conjugating enzyme UBE2D3. Component of the 4EHP-GYF2 complex, at least composed of EIF4E2, GIGYF2 and ZNF598.

The protein resides in the cytoplasm. It localises to the cytosol. It catalyses the reaction S-ubiquitinyl-[E2 ubiquitin-conjugating enzyme]-L-cysteine + [acceptor protein]-L-lysine = [E2 ubiquitin-conjugating enzyme]-L-cysteine + N(6)-ubiquitinyl-[acceptor protein]-L-lysine.. The protein operates within protein modification; protein ubiquitination. Its function is as follows. E3 ubiquitin-protein ligase that plays a key role in the ribosome quality control (RQC), a pathway that takes place when a ribosome has stalled during translation, leading to degradation of nascent peptide chains. ZNF598 is activated when ribosomes are stalled within an mRNA following translation of prematurely polyadenylated mRNAs. Acts as a ribosome collision sensor: specifically recognizes and binds collided di-ribosome, which arises when a trailing ribosome encounters a slower leading ribosome, leading to terminally arrest translation. Following binding to colliding ribosomes, mediates monoubiquitination of 40S ribosomal proteins RPS10/eS10 and RPS3/uS3, and 'Lys-63'-linked polyubiquitination of RPS20/uS10. Polyubiquitination of RPS20/uS10 promotes recruitment of the RQT (ribosome quality control trigger) complex, which drives the disassembly of stalled ribosomes, followed by degradation of nascent peptides. E3 ubiquitin-protein ligase activity is dependent on the E2 ubiquitin-conjugating enzyme UBE2D3. Also acts as an adapter that recruits the 4EHP-GYF2 complex to mRNAs. Independently of its role in RQC, may also act as a negative regulator of interferon-stimulated gene (ISG) expression. The chain is E3 ubiquitin-protein ligase ZNF598 from Mus musculus (Mouse).